Here is a 249-residue protein sequence, read N- to C-terminus: Precorrin-4 C(11)-methyltransferase (249 aa).

It belongs to the precorrin methyltransferase family.

The enzyme catalyses precorrin-4 + S-adenosyl-L-methionine = precorrin-5 + S-adenosyl-L-homocysteine. Its pathway is cofactor biosynthesis; adenosylcobalamin biosynthesis; cob(II)yrinate a,c-diamide from precorrin-2 (aerobic route): step 4/10. Catalyzes the methylation of C-11 in precorrin-4 to form precorrin-5. This is Precorrin-4 C(11)-methyltransferase (cobM) from Rhodococcus erythropolis (Arthrobacter picolinophilus).